A 688-amino-acid chain; its full sequence is Glycine--tRNA ligase beta subunit (688 aa).

Belongs to the class-II aminoacyl-tRNA synthetase family. Tetramer of two alpha and two beta subunits.

It localises to the cytoplasm. The catalysed reaction is tRNA(Gly) + glycine + ATP = glycyl-tRNA(Gly) + AMP + diphosphate. The polypeptide is Glycine--tRNA ligase beta subunit (Clostridioides difficile (strain 630) (Peptoclostridium difficile)).